The chain runs to 255 residues: Imidazole glycerol phosphate synthase subunit HisF (255 aa).

Residues D11 and D130 contribute to the active site.

The protein belongs to the HisA/HisF family. As to quaternary structure, heterodimer of HisH and HisF.

Its subcellular location is the cytoplasm. The enzyme catalyses 5-[(5-phospho-1-deoxy-D-ribulos-1-ylimino)methylamino]-1-(5-phospho-beta-D-ribosyl)imidazole-4-carboxamide + L-glutamine = D-erythro-1-(imidazol-4-yl)glycerol 3-phosphate + 5-amino-1-(5-phospho-beta-D-ribosyl)imidazole-4-carboxamide + L-glutamate + H(+). Its pathway is amino-acid biosynthesis; L-histidine biosynthesis; L-histidine from 5-phospho-alpha-D-ribose 1-diphosphate: step 5/9. Functionally, IGPS catalyzes the conversion of PRFAR and glutamine to IGP, AICAR and glutamate. The HisF subunit catalyzes the cyclization activity that produces IGP and AICAR from PRFAR using the ammonia provided by the HisH subunit. This chain is Imidazole glycerol phosphate synthase subunit HisF, found in Prochlorococcus marinus subsp. pastoris (strain CCMP1986 / NIES-2087 / MED4).